Here is a 448-residue protein sequence, read N- to C-terminus: Carbamoyl phosphate synthase arginine-specific small chain (448 aa).

The transit peptide at 1–27 directs the protein to the mitochondrion; sequence MFKNIARLASMARSAPRTTASFQTRFM. Residues 224–415 form the Glutamine amidotransferase type-1 domain; sequence HIAVIDCGVK…LGQVHQYRAA (192 aa). C304 functions as the Nucleophile in the catalytic mechanism. Residues H388 and E390 contribute to the active site.

The protein belongs to the CarA family. Heterodimer composed of 2 chains; the small (or glutamine) chain promotes the hydrolysis of glutamine to ammonia, which is used by the large (or ammonia) chain to synthesize carbamoyl phosphate.

The protein localises to the mitochondrion matrix. The enzyme catalyses hydrogencarbonate + L-glutamine + 2 ATP + H2O = carbamoyl phosphate + L-glutamate + 2 ADP + phosphate + 2 H(+). It carries out the reaction L-glutamine + H2O = L-glutamate + NH4(+). It functions in the pathway amino-acid biosynthesis; L-arginine biosynthesis; carbamoyl phosphate from bicarbonate: step 1/1. Its function is as follows. Small subunit of the arginine-specific carbamoyl phosphate synthase (CPSase). CPSase catalyzes the formation of carbamoyl phosphate from the ammonia moiety of glutamine, carbonate, and phosphate donated by ATP, the first step of the arginine biosynthetic pathway. The small subunit (glutamine amidotransferase) binds and cleaves glutamine to supply the large subunit with the substrate ammonia. In Yarrowia lipolytica (strain CLIB 122 / E 150) (Yeast), this protein is Carbamoyl phosphate synthase arginine-specific small chain (CPA1).